The primary structure comprises 173 residues: Pathogenesis-related protein 1C (173 aa).

An N-terminal signal peptide occupies residues 1–20; it reads MSTSAVLFLLLAVFAAGASA.

It belongs to the thaumatin family.

This Hordeum vulgare (Barley) protein is Pathogenesis-related protein 1C.